The following is a 220-amino-acid chain: MPSKTTSSTNVREELIKRSLDETVAQYMTLCFDPKHRFSSPVQTFNTLLLIASQHVINVSPDSKKMIEEIVNNAQNAQNYDELRGYIEELCAKMYPYIFRLNVKVNTISVKFKSLPPSTANEVLLGVASEIIRQLYSTAVFDENIEVVTEKFVKLRDITLKLLRSIQNTTLYQYMKSIGLDENYVMKPCESELPVQCFLEIQSRLLEVVEFIATHMNARF.

This is an uncharacterized protein from Acidianus two-tailed virus (ATV).